Consider the following 26-residue polypeptide: Probable early E4 17 kDa protein (26 aa).

The sequence is that of Probable early E4 17 kDa protein from Homo sapiens (Human).